A 211-amino-acid polypeptide reads, in one-letter code: Uracil phosphoribosyltransferase (211 aa).

Residues arginine 78, arginine 103, and 130–138 contribute to the 5-phospho-alpha-D-ribose 1-diphosphate site; that span reads DPMLATGGT. Residues isoleucine 195 and 200–202 each bind uracil; that span reads GDA. Aspartate 201 contributes to the 5-phospho-alpha-D-ribose 1-diphosphate binding site.

Belongs to the UPRTase family. Mg(2+) serves as cofactor.

The enzyme catalyses UMP + diphosphate = 5-phospho-alpha-D-ribose 1-diphosphate + uracil. The protein operates within pyrimidine metabolism; UMP biosynthesis via salvage pathway; UMP from uracil: step 1/1. With respect to regulation, allosterically activated by GTP. In terms of biological role, catalyzes the conversion of uracil and 5-phospho-alpha-D-ribose 1-diphosphate (PRPP) to UMP and diphosphate. This chain is Uracil phosphoribosyltransferase, found in Streptomyces avermitilis (strain ATCC 31267 / DSM 46492 / JCM 5070 / NBRC 14893 / NCIMB 12804 / NRRL 8165 / MA-4680).